The chain runs to 817 residues: Leucine--tRNA ligase (817 aa).

The 'HIGH' region signature appears at 42-52; sequence PYPSGRLHMGH. The 'KMSKS' region signature appears at 576–580; sequence KMSKS. Lys-579 is an ATP binding site.

It belongs to the class-I aminoacyl-tRNA synthetase family.

It is found in the cytoplasm. The catalysed reaction is tRNA(Leu) + L-leucine + ATP = L-leucyl-tRNA(Leu) + AMP + diphosphate. This is Leucine--tRNA ligase from Thioalkalivibrio sulfidiphilus (strain HL-EbGR7).